The primary structure comprises 704 residues: Phytyl ester synthase 1, chloroplastic (704 aa).

The N-terminal 27 residues, 1-27, are a transit peptide targeting the chloroplast; it reads MATCSSSLLVLPNLRLSSNQRRNFKVR.

Belongs to the diacylglycerol acyltransferase family. As to quaternary structure, interacts with PGM48. In terms of tissue distribution, mostly expressed in flowers (e.g. sepals, petals and stamen).

It is found in the plastid. The protein resides in the chloroplast. Its subcellular location is the plastoglobule. The enzyme catalyses a 1,2-diacyl-3-O-(beta-D-galactosyl)-sn-glycerol + a 1,2-diacylglycerol = an acyl-3-O-(beta-D-galactosyl)-sn-glycerol + a triacylglycerol. The catalysed reaction is a 1,2-diacylglycerol + a fatty acyl-CoA = a triacylglycerol + CoA. It catalyses the reaction a fatty acyl-[ACP] + a 1,2-diacylglycerol = a triacylglycerol + holo-[ACP]. It carries out the reaction phytol + a fatty acyl-CoA = a fatty acid phytyl ester + CoA. The enzyme catalyses phytol + tetradecanoyl-CoA = tetradecanoate phytyl ester + CoA. The catalysed reaction is a 1,3-diacylglycerol + a fatty acyl-CoA = a triacylglycerol + CoA. It catalyses the reaction 1,2-dihexanoylglycerol + tetradecanoyl-CoA = 1,2-dihexanoyl-3-tetradecanoylglycerol + CoA. It carries out the reaction 1,2-dihexanoylglycerol + hexadecanoyl-CoA = 1,2-dihexanoyl-3-hexadecanoylglycerol + CoA. The enzyme catalyses 1,2-dihexanoylglycerol + octadecanoyl-CoA = 1,2-dihexanoyl-3-octadecanoylglycerol + CoA. The catalysed reaction is (7Z,10Z,13Z)-hexadecatrienoyl-CoA + 1,2-dihexanoylglycerol = 1,2-dihexanoyl-3-(7Z,10Z,13Z-hexadecatrienoyl)-glycerol + CoA. It catalyses the reaction 1,2-dihexanoylglycerol + (9Z)-octadecenoyl-CoA = 1,2-dihexanoyl-3-(9Z-octadecenoyl)-glycerol + CoA. It carries out the reaction 1,2-dihexanoylglycerol + (9Z,12Z,15Z)-octadecatrienoyl-CoA = 1,2-dihexanoyl-3-(9Z,12Z,15Z-octadecatrienoyl)-glycerol + CoA. The enzyme catalyses phytol + decanoyl-CoA = decanoate phytyl ester + CoA. The catalysed reaction is (7Z,10Z,13Z)-hexadecatrienoyl-CoA + phytol = (7Z,10Z,13Z)-hexadecatrienoate phytyl ester + CoA. It catalyses the reaction phytol + dodecanoyl-CoA = dodecanoate phytyl ester + CoA. Its function is as follows. Acyltransferase involved in fatty acid phytyl ester synthesis in chloroplasts, a process required for the maintenance of the photosynthetic membrane integrity during abiotic stress and senescence. Exhibits phytyl ester synthesis and diacylglycerol acyltransferase activities with broad substrate specificities, and can employ acyl-CoAs, acyl carrier proteins, and galactolipids as acyl donors. In Arabidopsis thaliana (Mouse-ear cress), this protein is Phytyl ester synthase 1, chloroplastic.